A 190-amino-acid polypeptide reads, in one-letter code: E3 ubiquitin-protein ligase RNF183 (190 aa).

Residues 1 to 159 (MSEPQGQELR…RECVRNPHFR (159 aa)) are Cytoplasmic-facing. Residues 13–60 (CPVCWNPFNNTFHTPKVLDCCHSFCVECLAHLSLVTPARRRLLCPLCR) form an RING-type zinc finger. Residues 160–180 (IFAYLMAVILSVTLLLIFSIF) traverse the membrane as a helical; Anchor for type IV membrane protein segment. At 181-190 (WTKQFFWGMG) the chain is on the lumenal side.

Interacts with FATE1. Interacts with SEC16A. Interacts with BCL2L1. Post-translationally, autoubiquitinated (in vitro). As to expression, highly expressed in the kidney and testis.

The protein resides in the endoplasmic reticulum membrane. It is found in the endoplasmic reticulum. It localises to the golgi apparatus. The protein localises to the cis-Golgi network membrane. Its subcellular location is the lysosome membrane. The enzyme catalyses S-ubiquitinyl-[E2 ubiquitin-conjugating enzyme]-L-cysteine + [acceptor protein]-L-lysine = [E2 ubiquitin-conjugating enzyme]-L-cysteine + N(6)-ubiquitinyl-[acceptor protein]-L-lysine.. The protein operates within protein modification; protein ubiquitination. Acts as an E3 ubiquitin ligase catalyzing the covalent attachment of ubiquitin moieties onto substrate proteins. Triggers apoptosis in response to prolonged ER stress by mediating the polyubiquitination and subsequent proteasomal degradation of BCL2L1. May collaborate with FATE1 to restrain BIK protein levels thus regulating apoptotic signaling. The protein is E3 ubiquitin-protein ligase RNF183 (Rnf183) of Mus musculus (Mouse).